The primary structure comprises 302 residues: Glycine--tRNA ligase alpha subunit (302 aa).

The protein belongs to the class-II aminoacyl-tRNA synthetase family. In terms of assembly, tetramer of two alpha and two beta subunits.

Its subcellular location is the cytoplasm. The catalysed reaction is tRNA(Gly) + glycine + ATP = glycyl-tRNA(Gly) + AMP + diphosphate. This chain is Glycine--tRNA ligase alpha subunit (glyQ), found in Haemophilus influenzae (strain ATCC 51907 / DSM 11121 / KW20 / Rd).